The primary structure comprises 20 residues: Thylakoid lumenal 20 kDa protein (20 aa).

Positions 1-20 (RDVDVGSFLPKSPSDPSMVL) are disordered.

It localises to the plastid. Its subcellular location is the chloroplast thylakoid lumen. This Spinacia oleracea (Spinach) protein is Thylakoid lumenal 20 kDa protein.